Consider the following 536-residue polypeptide: GMP synthase [glutamine-hydrolyzing] (536 aa).

The Glutamine amidotransferase type-1 domain maps to 19–212; that stretch reads RILILDFGSQ…VHEICDCAGS (194 aa). Catalysis depends on cysteine 96, which acts as the Nucleophile. Residues histidine 186 and glutamate 188 contribute to the active site. The GMPS ATP-PPase domain maps to 213–411; the sequence is WTPDNIIDMR…LGLPAKMINR (199 aa). 240 to 246 is an ATP binding site; it reads SGGVDSS.

As to quaternary structure, homodimer.

It carries out the reaction XMP + L-glutamine + ATP + H2O = GMP + L-glutamate + AMP + diphosphate + 2 H(+). Its pathway is purine metabolism; GMP biosynthesis; GMP from XMP (L-Gln route): step 1/1. Catalyzes the synthesis of GMP from XMP. This Psychrobacter arcticus (strain DSM 17307 / VKM B-2377 / 273-4) protein is GMP synthase [glutamine-hydrolyzing].